A 27-amino-acid polypeptide reads, in one-letter code: Secretin (27 aa).

The residue at position 27 (Met27) is a Methionine amide.

Belongs to the glucagon family.

The protein resides in the secreted. Hormone involved in different processes, such as regulation of the pH of the duodenal content, food intake and water homeostasis. Exerts its biological effects by binding to secretin receptor (SCTR), a G-protein coupled receptor expressed in the basolateral domain of several cells. The protein is Secretin of Gallus gallus (Chicken).